The following is a 166-amino-acid chain: Peptide deformylase (166 aa).

2 residues coordinate Fe cation: C88 and H130. E131 is a catalytic residue. H134 provides a ligand contact to Fe cation.

It belongs to the polypeptide deformylase family. Requires Fe(2+) as cofactor.

The enzyme catalyses N-terminal N-formyl-L-methionyl-[peptide] + H2O = N-terminal L-methionyl-[peptide] + formate. Functionally, removes the formyl group from the N-terminal Met of newly synthesized proteins. Requires at least a dipeptide for an efficient rate of reaction. N-terminal L-methionine is a prerequisite for activity but the enzyme has broad specificity at other positions. This chain is Peptide deformylase, found in Caldicellulosiruptor bescii (strain ATCC BAA-1888 / DSM 6725 / KCTC 15123 / Z-1320) (Anaerocellum thermophilum).